The sequence spans 670 residues: FAD-binding monooxygenase ausC (670 aa).

Residues 144–147 (TWYW), 156–157 (DT), and Y162 contribute to the FAD site. 154 to 156 (MCD) serves as a coordination point for NADP(+). NADP(+) is bound by residues 299–305 (TGASAVQ) and 322–323 (RT).

The protein belongs to the FAD-binding monooxygenase family. Requires FAD as cofactor.

The catalysed reaction is preaustinoid A + AH2 + O2 = preaustinoid A1 + A + H2O. It participates in secondary metabolite biosynthesis; terpenoid biosynthesis. Its function is as follows. FAD-binding monooxygenase; part of the gene cluster that mediates the biosynthesis of calidodehydroaustin, a fungal meroterpenoid. The first step of the pathway is the synthesis of 3,5-dimethylorsellinic acid by the polyketide synthase ausA. 3,5-dimethylorsellinic acid is then prenylated by the polyprenyl transferase ausN. Further epoxidation by the FAD-dependent monooxygenase ausM and cyclization by the probable terpene cyclase ausL lead to the formation of protoaustinoid A. Protoaustinoid A is then oxidized to spiro-lactone preaustinoid A3 by the combined action of the FAD-binding monooxygenases ausB and ausC, and the dioxygenase ausE. Acid-catalyzed keto-rearrangement and ring contraction of the tetraketide portion of preaustinoid A3 by ausJ lead to the formation of preaustinoid A4. The aldo-keto reductase ausK, with the help of ausH, is involved in the next step by transforming preaustinoid A4 into isoaustinone which is in turn hydroxylated by the P450 monooxygenase ausI to form austinolide. The cytochrome P450 monooxygenase ausG modifies austinolide to austinol. Austinol is further acetylated to austin by the O-acetyltransferase ausP, which spontaneously changes to dehydroaustin. The cytochrome P450 monooxygenase ausR then converts dehydroaustin is into 7-dehydrodehydroaustin. The hydroxylation catalyzed by ausR permits the O-acetyltransferase ausQ to add an additional acetyl group to the molecule, leading to the formation of acetoxydehydroaustin. The short chain dehydrogenase ausT catalyzes the reduction of the double bond present between carbon atoms 1 and 2 to convert 7-dehydrodehydroaustin into 1,2-dihydro-7-hydroxydehydroaustin. AusQ catalyzes not only an acetylation reaction but also the addition of the PKS ausV diketide product to 1,2-dihydro-7-hydroxydehydroaustin, forming precalidodehydroaustin. Finally, the iron/alpha-ketoglutarate-dependent dioxygenase converts precalidodehydroaustin into calidodehydroaustin. This is FAD-binding monooxygenase ausC from Aspergillus calidoustus.